We begin with the raw amino-acid sequence, 510 residues long: MSAKKPLALVILDGYGYREDTASNAIANAKTPVMDALIANNPHTLISASGMDVGLPDGQMGNSEVGHTNIGAGRVVYQDLTRITKSIADGEFEQTPALVEAIDAAVKAEKAVHIMGLMSPGGVHSHEDHIYAAVEMAAARGAEKIYLHCFLDGRDTPPRSAENSLQRFQDLFAKLGKGRVASLVGRYYAMDRDNNWERVQVAYDLLTQAKAEFTAETAVAGLEAAYARDENDEFVKATAIKAEGQEDAIMQDGDAVIFMNYRADRARQITRAFVPGFDGFERAVFPAINFVMLTQYAADIPLATAFPPASLENTYGEWLSKQGQTQLRISETEKYAHVTFFFNGGVENEFEGEERQLVASPKVATYDLQPEMSSPELTEKLVAAIKSGKYDTIICNYPNADMVGHTGVYEAAEKAIEALDESVGKVVEAIKEVGGQLLITADHGNAEMMIDPETGGVHTAHTNLPVPLIYVGDKAVEFKEGGKLSDLAPTMLSLAGLEIPAEMSGDVLVK.

2 residues coordinate Mn(2+): D13 and S63. S63 acts as the Phosphoserine intermediate in catalysis. Substrate contacts are provided by residues H124, 154 to 155 (RD), R186, R192, 262 to 265 (RADR), and K334. Mn(2+)-binding residues include D401, H405, D442, H443, and H461.

It belongs to the BPG-independent phosphoglycerate mutase family. In terms of assembly, monomer. It depends on Mn(2+) as a cofactor.

The enzyme catalyses (2R)-2-phosphoglycerate = (2R)-3-phosphoglycerate. The protein operates within carbohydrate degradation; glycolysis; pyruvate from D-glyceraldehyde 3-phosphate: step 3/5. Its function is as follows. Catalyzes the interconversion of 2-phosphoglycerate and 3-phosphoglycerate. This Vibrio parahaemolyticus serotype O3:K6 (strain RIMD 2210633) protein is 2,3-bisphosphoglycerate-independent phosphoglycerate mutase.